The following is a 399-amino-acid chain: Developmentally-regulated G-protein 2 (399 aa).

Positions 63–288 (GRVALIGFPS…LLARMWDEMG (226 aa)) constitute an OBG-type G domain. GTP-binding positions include 69 to 76 (GFPSVGKS), 115 to 119 (DLPGI), and 246 to 249 (NKID). The TGS domain maps to 288–366 (GLVRVYSKPQ…EDEDVVQIVK (79 aa)). Positions 372 to 399 (EGGRGRFKSHSNAPARIADREKKAPLKQ) are disordered. Residues 388–399 (IADREKKAPLKQ) show a composition bias toward basic and acidic residues.

This sequence belongs to the TRAFAC class OBG-HflX-like GTPase superfamily. OBG GTPase family.

The protein localises to the cytoplasm. Its function is as follows. Binds GDP and GTP, and has low GTPase activity. The sequence is that of Developmentally-regulated G-protein 2 (DRG2) from Arabidopsis thaliana (Mouse-ear cress).